We begin with the raw amino-acid sequence, 271 residues long: uncharacterized protein (271 aa).

Positions 1 to 22 (MARELLFLACAIVIADSWPAKA) are cleaved as a signal peptide.

This is an uncharacterized protein from Sinorhizobium fredii (strain NBRC 101917 / NGR234).